Here is a 230-residue protein sequence, read N- to C-terminus: Dephospho-CoA kinase (230 aa).

The tract at residues 1–21 (MSKYAAAPSPYSHQPQTPEHK) is disordered. In terms of domain architecture, DPCK spans 26 to 225 (VVGLTGGIGS…QDYLKLAQQL (200 aa)). 34-39 (GSGKSA) is an ATP binding site.

This sequence belongs to the CoaE family.

The protein resides in the cytoplasm. It catalyses the reaction 3'-dephospho-CoA + ATP = ADP + CoA + H(+). The protein operates within cofactor biosynthesis; coenzyme A biosynthesis; CoA from (R)-pantothenate: step 5/5. Its function is as follows. Catalyzes the phosphorylation of the 3'-hydroxyl group of dephosphocoenzyme A to form coenzyme A. The polypeptide is Dephospho-CoA kinase (Psychrobacter cryohalolentis (strain ATCC BAA-1226 / DSM 17306 / VKM B-2378 / K5)).